The chain runs to 439 residues: Ribosomal protein uS12 methylthiotransferase RimO (439 aa).

Residues 2 to 114 (SKLYLMSLGC…IDEMILKKTN (113 aa)) enclose the MTTase N-terminal domain. [4Fe-4S] cluster-binding residues include cysteine 11, cysteine 45, cysteine 77, cysteine 146, cysteine 150, and cysteine 153. The Radical SAM core domain maps to 132 to 363 (TGSNSHAFIK…VDEVIEKSFE (232 aa)).

The protein belongs to the methylthiotransferase family. RimO subfamily. [4Fe-4S] cluster serves as cofactor.

It is found in the cytoplasm. It catalyses the reaction L-aspartate(89)-[ribosomal protein uS12]-hydrogen + (sulfur carrier)-SH + AH2 + 2 S-adenosyl-L-methionine = 3-methylsulfanyl-L-aspartate(89)-[ribosomal protein uS12]-hydrogen + (sulfur carrier)-H + 5'-deoxyadenosine + L-methionine + A + S-adenosyl-L-homocysteine + 2 H(+). In terms of biological role, catalyzes the methylthiolation of an aspartic acid residue of ribosomal protein uS12. In Campylobacter jejuni subsp. jejuni serotype O:2 (strain ATCC 700819 / NCTC 11168), this protein is Ribosomal protein uS12 methylthiotransferase RimO.